Consider the following 262-residue polypeptide: Abhydrolase domain-containing protein AKT2 (262 aa).

The Peroxisomal targeting signal type 1 signature appears at 260–262; that stretch reads SKL.

It belongs to the AB hydrolase superfamily. AKT2 hydrolase family.

It localises to the peroxisome. Its pathway is mycotoxin biosynthesis. Its function is as follows. Abhydrolase domain-containing protein; part of the gene clusters that mediate the biosynthesis of the host-selective toxins (HSTs) AK-toxins responsible for Japanese pear black spot disease by the Japanese pear pathotype. AK-toxins are esters of 9,10-epoxy 8-hydroxy 9-methyldecatrienoic acid (EDA). On cellular level, AK-toxins affect plasma membrane of susceptible cells and cause a sudden increase in loss of K(+) after a few minutes of toxin treatment. The acyl-CoA ligase AKT1, the hydrolase AKT2 and enoyl-CoA hydratase AKT3 are all involved in the biosynthesis of the AK-, AF- and ACT-toxin common 9,10-epoxy-8-hydroxy-9-methyl-decatrienoic acid (EDA) structural moiety. Part of the EDA biosynthesis occurs in the peroxisome since these 3 enzymes are localized in peroxisomes. The exact roles of the 3 enzymes, as well as of additional AK-toxin clusters enzymes, including AKT4, AKT6 and AKTS1, have still to be elucidated. The Cytochrome P450 monooxygenase AKT7 on the other side functions to limit production of EDA and AK-toxin, probably via the catalysis of a side reaction of EDA or its precursor. This Alternaria alternata (Alternaria rot fungus) protein is Abhydrolase domain-containing protein AKT2.